Here is a 353-residue protein sequence, read N- to C-terminus: S-adenosylmethionine:tRNA ribosyltransferase-isomerase (353 aa).

The protein belongs to the QueA family. Monomer.

It localises to the cytoplasm. It catalyses the reaction 7-aminomethyl-7-carbaguanosine(34) in tRNA + S-adenosyl-L-methionine = epoxyqueuosine(34) in tRNA + adenine + L-methionine + 2 H(+). The protein operates within tRNA modification; tRNA-queuosine biosynthesis. In terms of biological role, transfers and isomerizes the ribose moiety from AdoMet to the 7-aminomethyl group of 7-deazaguanine (preQ1-tRNA) to give epoxyqueuosine (oQ-tRNA). This is S-adenosylmethionine:tRNA ribosyltransferase-isomerase from Sodalis glossinidius (strain morsitans).